The following is a 190-amino-acid chain: Peptidyl-prolyl cis-trans isomerase FKBP20-1 (190 aa).

Gly-2 is subject to N-acetylglycine. Residues 32 to 121 (LPVVDVHYEG…IFEVELVACR (90 aa)) enclose the PPIase FKBP-type domain. Over residues 149–163 (AAAKEDDKKKREEAK) the composition is skewed to basic and acidic residues. Residues 149-190 (AAAKEDDKKKREEAKAAAAARIQAKLDAKKGPGKGKGKGKAK) are disordered. Positions 179 to 190 (GPGKGKGKGKAK) are enriched in basic residues.

It belongs to the FKBP-type PPIase family.

It carries out the reaction [protein]-peptidylproline (omega=180) = [protein]-peptidylproline (omega=0). Its function is as follows. PPIases accelerate the folding of proteins. It catalyzes the cis-trans isomerization of proline imidic peptide bonds in oligopeptides. This Arabidopsis thaliana (Mouse-ear cress) protein is Peptidyl-prolyl cis-trans isomerase FKBP20-1 (FKBP20-1).